A 210-amino-acid chain; its full sequence is Outer-membrane lipoprotein LolB (210 aa).

Residues 1–29 form the signal peptide; sequence MSLISNNEERSLRVRYCIAIALSALLISG. The N-palmitoyl cysteine moiety is linked to residue cysteine 30. Cysteine 30 is lipidated: S-diacylglycerol cysteine.

This sequence belongs to the LolB family. Monomer.

The protein resides in the cell outer membrane. In terms of biological role, plays a critical role in the incorporation of lipoproteins in the outer membrane after they are released by the LolA protein. This is Outer-membrane lipoprotein LolB from Coxiella burnetii (strain CbuK_Q154) (Coxiella burnetii (strain Q154)).